Consider the following 161-residue polypeptide: Calmodulin-like protein (161 aa).

EF-hand domains lie at glutamate 21–asparagine 56, proline 57–glutamate 92, threonine 93–glutamine 128, and phenylalanine 129–glutamine 161. 19 residues coordinate Ca(2+): aspartate 34, aspartate 36, asparagine 38, threonine 40, glutamate 45, aspartate 70, aspartate 72, asparagine 74, glutamine 76, glutamate 81, aspartate 106, aspartate 108, asparagine 110, glutamate 117, aspartate 142, aspartate 144, aspartate 146, glutamate 148, and glutamate 153.

The protein belongs to the calmodulin family.

Its function is as follows. This protein resembles calmodulin in sequence but possibly resembles troponin C in function. This chain is Calmodulin-like protein (cal-1), found in Caenorhabditis elegans.